We begin with the raw amino-acid sequence, 494 residues long: Splicing regulatory glutamine/lysine-rich protein 1 (494 aa).

The RRM domain maps to 69-145; it reads RTVYVGNLNS…RPLKINHSNN (77 aa). A phosphoserine mark is found at S174 and S187. A disordered region spans residues 176 to 494; sequence ISAAIEPESG…ESPCSKADAV (319 aa). Residues 183–192 are compositionally biased toward basic and acidic residues; sequence ESGKSNERKG. Residues 193 to 262 are compositionally biased toward basic residues; it reads GRSRSHTRSK…KSRSRSRSRD (70 aa). Residues 263-340 are compositionally biased toward basic and acidic residues; sequence KRKDTREKVK…DRSKETDEKR (78 aa). At T348 the chain carries Phosphothreonine. Residues 357 to 373 are compositionally biased toward basic residues; that stretch reads RRSRSTSRERRRRRSRS. The span at 404 to 474 shows a compositional bias: basic and acidic residues; that stretch reads REKERDHISD…SPRTEDEGKV (71 aa). The span at 476-486 shows a compositional bias: polar residues; sequence HNGNCQPNEES. K490 is covalently cross-linked (Glycyl lysine isopeptide (Lys-Gly) (interchain with G-Cter in SUMO2)).

It belongs to the splicing factor SR family. As to quaternary structure, homodimer. Binds SFRS1, SFRS2, SFRS3 and SFRS6. Interacts with the spliceosome. Interacts with SREK1IP1.

The protein resides in the nucleus. Functionally, participates in the regulation of alternative splicing by modulating the activity of other splice facors. Inhibits the splicing activity of SFRS1, SFRS2 and SFRS6. Augments the splicing activity of SFRS3. This chain is Splicing regulatory glutamine/lysine-rich protein 1 (Srek1), found in Mus musculus (Mouse).